A 463-amino-acid polypeptide reads, in one-letter code: Paraneoplastic antigen Ma3 (463 aa).

Positions 363–410 (VGAVPLPASGNSFDARPSQGYRRRRGRGQHRRGGVARAGSRGSRKRKR) are disordered. Positions 383-396 (YRRRRGRGQHRRGG) are enriched in basic residues. The CCHC-type zinc finger occupies 412-429 (TFCYSCGEDGHIRVQCIN). Positions 440 to 463 (KQAAVESGNGNWAWDKSHPKSKAK) are disordered.

It belongs to the PNMA family. Expressed at high levels in the brain and testis. Expressed at lower levels in the heart, trachea and kidney.

It is found in the nucleus. It localises to the nucleolus. The chain is Paraneoplastic antigen Ma3 (PNMA3) from Homo sapiens (Human).